Here is a 216-residue protein sequence, read N- to C-terminus: Thymidine kinase (216 aa).

ATP-binding positions include 9–16 (GTMDCGKS) and 86–89 (DEAQ). The active-site Proton acceptor is glutamate 87.

It belongs to the thymidine kinase family. As to quaternary structure, homotetramer.

The protein localises to the cytoplasm. The enzyme catalyses thymidine + ATP = dTMP + ADP + H(+). The polypeptide is Thymidine kinase (Streptomyces avermitilis (strain ATCC 31267 / DSM 46492 / JCM 5070 / NBRC 14893 / NCIMB 12804 / NRRL 8165 / MA-4680)).